Here is a 143-residue protein sequence, read N- to C-terminus: Nucleoside diphosphate kinase (143 aa).

6 residues coordinate ATP: K11, F59, R87, T93, R104, and N114. The active-site Pros-phosphohistidine intermediate is H117.

It belongs to the NDK family. In terms of assembly, homotetramer. Mg(2+) serves as cofactor.

The protein localises to the cytoplasm. The enzyme catalyses a 2'-deoxyribonucleoside 5'-diphosphate + ATP = a 2'-deoxyribonucleoside 5'-triphosphate + ADP. The catalysed reaction is a ribonucleoside 5'-diphosphate + ATP = a ribonucleoside 5'-triphosphate + ADP. Its function is as follows. Major role in the synthesis of nucleoside triphosphates other than ATP. The ATP gamma phosphate is transferred to the NDP beta phosphate via a ping-pong mechanism, using a phosphorylated active-site intermediate. The chain is Nucleoside diphosphate kinase from Shewanella woodyi (strain ATCC 51908 / MS32).